Here is a 374-residue protein sequence, read N- to C-terminus: MPNPLPLVFDAPRRAKPPRHFADLDATARAAAVAELGLPAFRAKQLATQYYGRLTADPQQMTDLPAAVREQVAEALFPDLLTAVREIETDAGETRKVLWRAVDGTTFESVLMRYSDRNTVCISSQAGCGMACPFCATGQGGLQRNLSTAEILEQVRAAAVELRDRDGEGIAPAARGGRLSNIVFMGMGEPLANYNRVIAAVRRIVAPPPDGFGISARSVTVSTVGLAPAIRKLADERLNVTLALSLHAPDDELRDTLVPVNNRWKVSEALDAARYYADVTGRRVSIEYALIRDVNDQPWRADLLGKRLHGALGPLVHVNVIPLNPTPGSEWDASPKPAEREFVRRVRERGVSCTVRDTRGREIAAACGQLAAEG.

Glu108 acts as the Proton acceptor in catalysis. The Radical SAM core domain occupies 114–361 (YSDRNTVCIS…SCTVRDTRGR (248 aa)). A disulfide bond links Cys121 and Cys367. [4Fe-4S] cluster-binding residues include Cys128, Cys132, and Cys135. S-adenosyl-L-methionine contacts are provided by residues 188–189 (GE), Ser222, 245–247 (SLH), and Asn324. The active-site S-methylcysteine intermediate is the Cys367.

The protein belongs to the radical SAM superfamily. RlmN family. [4Fe-4S] cluster serves as cofactor.

The protein resides in the cytoplasm. It catalyses the reaction adenosine(2503) in 23S rRNA + 2 reduced [2Fe-2S]-[ferredoxin] + 2 S-adenosyl-L-methionine = 2-methyladenosine(2503) in 23S rRNA + 5'-deoxyadenosine + L-methionine + 2 oxidized [2Fe-2S]-[ferredoxin] + S-adenosyl-L-homocysteine. The enzyme catalyses adenosine(37) in tRNA + 2 reduced [2Fe-2S]-[ferredoxin] + 2 S-adenosyl-L-methionine = 2-methyladenosine(37) in tRNA + 5'-deoxyadenosine + L-methionine + 2 oxidized [2Fe-2S]-[ferredoxin] + S-adenosyl-L-homocysteine. Its function is as follows. Specifically methylates position 2 of adenine 2503 in 23S rRNA and position 2 of adenine 37 in tRNAs. The protein is Probable dual-specificity RNA methyltransferase RlmN of Mycobacterium sp. (strain JLS).